Reading from the N-terminus, the 198-residue chain is Transmembrane protein 9B (198 aa).

The first 33 residues, 1-33, serve as a signal peptide directing secretion; the sequence is MATLWGGLLRLGSLLSLSCLALSVLLLAQLSDA. A glycan (N-linked (GlcNAc...) asparagine) is linked at N60. The helical transmembrane segment at 105 to 125 threads the bilayer; it reads IIIYLSILGLLLLYMVYLTLV. S142 and S189 each carry phosphoserine.

It belongs to the TMEM9 family. Post-translationally, N-glycosylated.

The protein resides in the lysosome membrane. Its subcellular location is the early endosome membrane. Its function is as follows. Enhances production of pro-inflammatory cytokines induced by TNF, IL1B, and TLR ligands. Has a role in TNF activation of both the NF-kappaB and MAPK pathways. The chain is Transmembrane protein 9B (TMEM9B) from Homo sapiens (Human).